The chain runs to 388 residues: Calreticulin (388 aa).

The signal sequence occupies residues 1-17 (MQLSLLVGLVCFSAINA). Residues cysteine 103 and cysteine 135 are joined by a disulfide bond. 4 residues coordinate an alpha-D-glucoside: tyrosine 107, lysine 109, tyrosine 126, and aspartate 133. Tandem repeats lie at residues 189–200 (AESGELEADWDF), 208–219 (DPDAKKPEDWDE), 225–236 (DEDDKKPEDWDK), 242–253 (DPDAKKPEDWDD), 257–267 (GEWEPPMVDNP), 271–281 (GEWKPKQKKNP), and 285–295 (GKWIHPEIEIP). Residues 189–253 (AESGELEADW…DAKKPEDWDD (65 aa)) form a 4 X approximate repeats region. Residues 193-282 (ELEADWDFLP…WKPKQKKNPA (90 aa)) are disordered. Residues 205 to 215 (KIKDPDAKKPE) are compositionally biased toward basic and acidic residues. Over residues 216 to 227 (DWDEREFIDDED) the composition is skewed to acidic residues. A compositionally biased stretch (basic and acidic residues) spans 228-249 (DKKPEDWDKPEHIPDPDAKKPE). Residues 250–259 (DWDDEMDGEW) show a composition bias toward acidic residues. The 3 X approximate repeats stretch occupies residues 257–295 (GEWEPPMVDNPEYKGEWKPKQKKNPAYKGKWIHPEIEIP). Aspartate 315 provides a ligand contact to an alpha-D-glucoside. The interval 349 to 388 (REGEKKKGKKTKKQKKKEKNEKIKKEKMKKRKRANRKKKK) is disordered. Composition is skewed to basic residues over residues 354–365 (KKGKKTKKQKKK) and 373–388 (KEKM…KKKK).

The protein belongs to the calreticulin family.

It is found in the endoplasmic reticulum lumen. Molecular calcium-binding chaperone promoting folding, oligomeric assembly and quality control in the ER via the calreticulin/calnexin cycle. This lectin may interact transiently with almost all of the monoglucosylated glycoproteins that are synthesized in the ER. The polypeptide is Calreticulin (crt-1) (Onchocerca volvulus).